A 511-amino-acid chain; its full sequence is GMP synthase [glutamine-hydrolyzing] (511 aa).

The 191-residue stretch at 5 to 195 (MILVLDFGGQ…LYNICGCKGD (191 aa)) folds into the Glutamine amidotransferase type-1 domain. The active-site Nucleophile is the Cys-82. Residues His-169 and Glu-171 contribute to the active site. One can recognise a GMPS ATP-PPase domain in the interval 196 to 386 (WKMSSFVENS…LGIPEDLVWR (191 aa)). 223–229 (SGGVDSS) is a binding site for ATP.

In terms of assembly, homodimer.

The enzyme catalyses XMP + L-glutamine + ATP + H2O = GMP + L-glutamate + AMP + diphosphate + 2 H(+). The protein operates within purine metabolism; GMP biosynthesis; GMP from XMP (L-Gln route): step 1/1. Its function is as follows. Catalyzes the synthesis of GMP from XMP. This chain is GMP synthase [glutamine-hydrolyzing], found in Ruminiclostridium cellulolyticum (strain ATCC 35319 / DSM 5812 / JCM 6584 / H10) (Clostridium cellulolyticum).